The sequence spans 294 residues: DNA replication complex GINS protein SLD5 (294 aa).

Belongs to the GINS4/SLD5 family. Component of the GINS complex which is a heterotetramer composed of SLD5, PSF1, PSF2 and PSF3. Interacts with PSF2.

It localises to the nucleus. Functionally, required for DNA replication. Functions as part of the GINS complex which plays an essential role in the initiation of DNA replication by binding to DNA replication origins and facilitating the assembly of the DNA replication machinery. This chain is DNA replication complex GINS protein SLD5, found in Saccharomyces cerevisiae (strain ATCC 204508 / S288c) (Baker's yeast).